Consider the following 832-residue polypeptide: Cytosolic carboxypeptidase-like protein 5 (832 aa).

The segment at 27–50 (TVPSDGEGVGGAATAPTSGSASSP) is disordered. Over residues 38–50 (AATAPTSGSASSP) the composition is skewed to low complexity. The region spanning 157-571 (YPFSYSDCQD…ALAIAALDMA (415 aa)) is the Peptidase M14 domain. Positions 252 and 255 each coordinate Zn(2+). A compositionally biased stretch (low complexity) spans 343-354 (NSKNPSNQQPSS). Disordered stretches follow at residues 343-362 (NSKNPSNQQPSSLHLPPEVP) and 376-402 (LHLGQSPDGENHDRWTETEPTEEKTDP). The span at 384–401 (GENHDRWTETEPTEEKTD) shows a compositional bias: basic and acidic residues. His435 lines the Zn(2+) pocket. Glu517 functions as the Proton donor/acceptor in the catalytic mechanism. The segment at 606-752 (STANVGLNKK…ASPTSSRNMG (147 aa)) is disordered. The segment covering 621-636 (PPKSNNGLPVSCSENA) has biased composition (polar residues). The span at 644–654 (STGTSTGGSSS) shows a compositional bias: low complexity. Polar residues predominate over residues 655–666 (QQNSPQMKNSPS). Residues 708-752 (QQQQQQQQQQQQQQQQPLNQRSTTSSLAPSPTLASASPTSSRNMG) are compositionally biased toward low complexity.

This sequence belongs to the peptidase M14 family. It depends on Zn(2+) as a cofactor.

It localises to the cytoplasm. It is found in the cytosol. The protein resides in the nucleus. The protein localises to the cytoskeleton. Its subcellular location is the spindle. It localises to the midbody. It catalyses the reaction gamma-L-glutamyl-L-glutamyl-[protein] + H2O = L-glutamyl-[protein] + L-glutamate. The enzyme catalyses (L-glutamyl)(n+1)-gamma-L-glutamyl-L-glutamyl-[protein] + H2O = (L-glutamyl)(n)-gamma-L-glutamyl-L-glutamyl-[protein] + L-glutamate. The catalysed reaction is C-terminal L-alpha-aminoacyl-L-glutamyl-[tubulin] + H2O = C-terminal L-alpha-aminoacyl-[tubulin] + L-glutamate. It carries out the reaction C-terminal L-alpha-aminoacyl-L-glutamyl-L-glutamyl-[tubulin] + H2O = C-terminal L-alpha-aminoacyl-L-glutamyl-[tubulin] + L-glutamate. Its function is as follows. Metallocarboxypeptidase that mediates deglutamylation of tubulin and non-tubulin target proteins. Catalyzes the removal of polyglutamate side chains present on the gamma-carboxyl group of glutamate residues within the C-terminal tail of alpha- and beta-tubulin. Cleaves alpha- and gamma-linked polyglutamate tubulin side-chain, as well as the branching point glutamate. Also catalyzes the removal of alpha-linked glutamate residues from the carboxy-terminus of alpha-tubulin. Mediates deglutamylation of nucleotidyltransferase CGAS, leading to CGAS antiviral defense response activation. In Rattus norvegicus (Rat), this protein is Cytosolic carboxypeptidase-like protein 5 (Agbl5).